The following is a 530-amino-acid chain: Autoinducer-2 kinase (530 aa).

Belongs to the FGGY kinase family.

It is found in the cytoplasm. It catalyses the reaction (S)-4,5-dihydroxypentane-2,3-dione + ATP = (2S)-2-hydroxy-3,4-dioxopentyl phosphate + ADP + H(+). Catalyzes the phosphorylation of autoinducer-2 (AI-2) to phospho-AI-2, which subsequently inactivates the transcriptional regulator LsrR and leads to the transcription of the lsr operon. Phosphorylates the ring-open form of (S)-4,5-dihydroxypentane-2,3-dione (DPD), which is the precursor to all AI-2 signaling molecules, at the C5 position. The sequence is that of Autoinducer-2 kinase from Salmonella paratyphi B (strain ATCC BAA-1250 / SPB7).